We begin with the raw amino-acid sequence, 522 residues long: Maturase K (522 aa).

The protein belongs to the intron maturase 2 family. MatK subfamily.

The protein localises to the plastid. It localises to the chloroplast. Usually encoded in the trnK tRNA gene intron. Probably assists in splicing its own and other chloroplast group II introns. The polypeptide is Maturase K (Schizorhiza neglecta (Lapeirousia neglecta)).